A 346-amino-acid polypeptide reads, in one-letter code: Small ribosomal subunit biogenesis GTPase RsgA 1 (346 aa).

Residues A93–F248 form the CP-type G domain. GTP contacts are provided by residues T138–D141 and G190–S198. The Zn(2+) site is built by C271, C276, H278, and C284.

The protein belongs to the TRAFAC class YlqF/YawG GTPase family. RsgA subfamily. In terms of assembly, monomer. Associates with 30S ribosomal subunit, binds 16S rRNA. Requires Zn(2+) as cofactor.

It localises to the cytoplasm. In terms of biological role, one of several proteins that assist in the late maturation steps of the functional core of the 30S ribosomal subunit. Helps release RbfA from mature subunits. May play a role in the assembly of ribosomal proteins into the subunit. Circularly permuted GTPase that catalyzes slow GTP hydrolysis, GTPase activity is stimulated by the 30S ribosomal subunit. The chain is Small ribosomal subunit biogenesis GTPase RsgA 1 from Listeria monocytogenes serovar 1/2a (strain ATCC BAA-679 / EGD-e).